Here is a 92-residue protein sequence, read N- to C-terminus: uncharacterized protein (92 aa).

The helical transmembrane segment at 65–86 (AVWIFWLCFLVSGLSRAFLVYF) threads the bilayer.

It is found in the membrane. This is an uncharacterized protein from Treponema pallidum (strain Nichols).